Reading from the N-terminus, the 271-residue chain is Formamidopyrimidine-DNA glycosylase (271 aa).

The active-site Schiff-base intermediate with DNA is proline 2. Glutamate 3 (proton donor) is an active-site residue. Lysine 58 (proton donor; for beta-elimination activity) is an active-site residue. Histidine 92, arginine 111, and arginine 152 together coordinate DNA. An FPG-type zinc finger spans residues 237-271 (FVYGREGEACKQCGRVLKHATIGQRATVWCGSCQR). The Proton donor; for delta-elimination activity role is filled by arginine 261.

The protein belongs to the FPG family. Monomer. The cofactor is Zn(2+).

The enzyme catalyses Hydrolysis of DNA containing ring-opened 7-methylguanine residues, releasing 2,6-diamino-4-hydroxy-5-(N-methyl)formamidopyrimidine.. It catalyses the reaction 2'-deoxyribonucleotide-(2'-deoxyribose 5'-phosphate)-2'-deoxyribonucleotide-DNA = a 3'-end 2'-deoxyribonucleotide-(2,3-dehydro-2,3-deoxyribose 5'-phosphate)-DNA + a 5'-end 5'-phospho-2'-deoxyribonucleoside-DNA + H(+). Its function is as follows. Involved in base excision repair of DNA damaged by oxidation or by mutagenic agents. Acts as a DNA glycosylase that recognizes and removes damaged bases. Has a preference for oxidized purines, such as 7,8-dihydro-8-oxoguanine (8-oxoG). Has AP (apurinic/apyrimidinic) lyase activity and introduces nicks in the DNA strand. Cleaves the DNA backbone by beta-delta elimination to generate a single-strand break at the site of the removed base with both 3'- and 5'-phosphates. This is Formamidopyrimidine-DNA glycosylase from Xanthomonas axonopodis pv. citri (strain 306).